A 199-amino-acid chain; its full sequence is Fe/S biogenesis protein NfuA (199 aa).

C151 and C154 together coordinate [4Fe-4S] cluster.

Belongs to the NfuA family. In terms of assembly, homodimer. [4Fe-4S] cluster serves as cofactor.

In terms of biological role, involved in iron-sulfur cluster biogenesis. Binds a 4Fe-4S cluster, can transfer this cluster to apoproteins, and thereby intervenes in the maturation of Fe/S proteins. Could also act as a scaffold/chaperone for damaged Fe/S proteins. The sequence is that of Fe/S biogenesis protein NfuA from Xanthomonas axonopodis pv. citri (strain 306).